A 24-amino-acid polypeptide reads, in one-letter code: Brevinin-1Pa (24 aa).

A disulfide bridge links cysteine 18 with cysteine 24.

As to expression, expressed by the skin glands.

It is found in the secreted. In terms of biological role, antibacterial activity against Gram-positive bacterium S.aureus and Gram-negative bacterium E.coli. Has activity against C.albicans. The sequence is that of Brevinin-1Pa from Lithobates pipiens (Northern leopard frog).